Here is a 130-residue protein sequence, read N- to C-terminus: DNA-directed RNA polymerase subunit omega (130 aa).

Residues 110–130 (EELLKGLEGLAPPEEQPEEDE) are disordered.

It belongs to the RNA polymerase subunit omega family. As to quaternary structure, the RNAP catalytic core consists of 2 alpha, 1 beta, 1 beta' and 1 omega subunit. When a sigma factor is associated with the core the holoenzyme is formed, which can initiate transcription.

It carries out the reaction RNA(n) + a ribonucleoside 5'-triphosphate = RNA(n+1) + diphosphate. Its function is as follows. Promotes RNA polymerase assembly. Latches the N- and C-terminal regions of the beta' subunit thereby facilitating its interaction with the beta and alpha subunits. This chain is DNA-directed RNA polymerase subunit omega, found in Bradyrhizobium sp. (strain BTAi1 / ATCC BAA-1182).